The chain runs to 331 residues: 2-keto-3-deoxygluconate permease (331 aa).

Helical transmembrane passes span Ile10–Pro30, Gly42–Ile62, Leu77–Pro97, Gly100–Met120, Ala141–Ala161, Leu163–Ala183, Pro200–Met220, Leu224–Ala244, Thr254–Ala274, and Ala289–Tyr309.

The protein belongs to the KdgT transporter family.

Its subcellular location is the cell inner membrane. It catalyses the reaction 2-dehydro-3-deoxy-D-gluconate(in) + H(+)(in) = 2-dehydro-3-deoxy-D-gluconate(out) + H(+)(out). Its function is as follows. Catalyzes the proton-dependent uptake of 2-keto-3-deoxygluconate (KDG) into the cell. The sequence is that of 2-keto-3-deoxygluconate permease from Enterobacter sp. (strain 638).